Here is a 218-residue protein sequence, read N- to C-terminus: MSSGAASGTGRGRPRGGGPGPRDPPPGETHKLVVVGGGGVGKSALTIQFIQSYFVSDYDPTIEDSYTKICTVDGIPARLDILDTAGQEEFGAMREQYMRAGNGFLLVFAINDRQSFIEVSKLFTQILRVKDRDDFPIVLVGNKADLETQRQVLRSEASSFSASHHMTYFEASAKLRLNVDEAFEQLVRTVRKYQEQELPPSPPSAPRKKDGRCPCVLL.

The disordered stretch occupies residues 1–30 (MSSGAASGTGRGRPRGGGPGPRDPPPGETH). Residues 7 to 20 (SGTGRGRPRGGGPG) are compositionally biased toward gly residues. 36–44 (GGGGVGKSA) provides a ligand contact to GTP. Positions 58–66 (YDPTIEDSY) match the Effector region motif. Residues 83 to 87 (DTAGQ), 142 to 145 (NKAD), and 172 to 174 (SAK) each bind GTP. Cysteine methyl ester is present on Cys-215. Cys-215 carries S-geranylgeranyl cysteine lipidation. Residues 216 to 218 (VLL) constitute a propeptide, removed in mature form.

It belongs to the small GTPase superfamily. Ras family. In terms of assembly, interacts with PLCE1. Interacts (active GTP-bound form preferentially) with RGS14. Interacts with OSBPL3. Interacts with ZDHHC19. Post-translationally, S-palmitoylated by ZDHHC19, leading to increased association with membranes and with rafts/caveolae as well as enhanced cell viability.

The protein resides in the cell membrane. It catalyses the reaction GTP + H2O = GDP + phosphate + H(+). In terms of biological role, GTP-binding protein with GTPase activity, likely involved in the regulation of MAPK signaling pathway and thereby controlling multiple cellular processes. Regulates the organization of the actin cytoskeleton. With OSPBL3, modulates integrin beta-1 (ITGB1) activity. This chain is Ras-related protein R-Ras (Rras), found in Rattus norvegicus (Rat).